A 74-amino-acid chain; its full sequence is DNA-directed RNA polymerase subunit omega (74 aa).

It belongs to the RNA polymerase subunit omega family. In terms of assembly, the RNAP catalytic core consists of 2 alpha, 1 beta, 1 beta' and 1 omega subunit. When a sigma factor is associated with the core the holoenzyme is formed, which can initiate transcription.

The catalysed reaction is RNA(n) + a ribonucleoside 5'-triphosphate = RNA(n+1) + diphosphate. Its function is as follows. Promotes RNA polymerase assembly. Latches the N- and C-terminal regions of the beta' subunit thereby facilitating its interaction with the beta and alpha subunits. This is DNA-directed RNA polymerase subunit omega from Lactobacillus acidophilus (strain ATCC 700396 / NCK56 / N2 / NCFM).